The primary structure comprises 188 residues: FMN reductase (NADH) RutF (188 aa).

This sequence belongs to the non-flavoprotein flavin reductase family. RutF subfamily.

It carries out the reaction FMNH2 + NAD(+) = FMN + NADH + 2 H(+). Catalyzes the reduction of FMN to FMNH2 which is used to reduce pyrimidine by RutA via the Rut pathway. The sequence is that of FMN reductase (NADH) RutF from Acinetobacter baylyi (strain ATCC 33305 / BD413 / ADP1).